Here is a 160-residue protein sequence, read N- to C-terminus: Cathelin-related peptide SC5 (160 aa).

A signal peptide spans 1–29 (METQRASLSLGRCSLWLLLLGLALPSASA). A propeptide spanning residues 30 to 131 (QVLSYREAVL…DITCAEPQSV (102 aa)) is cleaved from the precursor. Cystine bridges form between Cys86–Cys97 and Cys108–Cys125.

The protein belongs to the cathelicidin family.

It is found in the secreted. Functionally, broad spectrum bactericidal agent. This chain is Cathelin-related peptide SC5, found in Ovis aries (Sheep).